The sequence spans 250 residues: MQLRQASVLPRLSPTNAECRPGELLHIIGPNGAGKSTLLARAAGLLAGEGEVYLAGTPLSQYTAADLAVRRAYLAQQQPPLALMPVFQYWQRHQPPLAQEYAVEKVVHFLAERLMLTDKLARPLTQLSGGEWQRVRLVAALLQIWPTINPHARLLLLDEPTNSLDVAQQVALDSLLSELCRLGIAVVVCAHDLNHSAHHADRVWLLSAGVLVAQGETEDVMLPEVLSPVFGVAFQRHVVDGRNWIITRSA.

Residues 3 to 233 (LRQASVLPRL…EVLSPVFGVA (231 aa)) form the ABC transporter domain. 29–36 (GPNGAGKS) serves as a coordination point for ATP.

Belongs to the ABC transporter superfamily. Vitamin B12 importer (TC 3.A.1.13.1) family. In terms of assembly, the complex is composed of two ATP-binding proteins (BtuD), two transmembrane proteins (BtuC) and a solute-binding protein (BtuF).

Its subcellular location is the cell inner membrane. The catalysed reaction is an R-cob(III)alamin(out) + ATP + H2O = an R-cob(III)alamin(in) + ADP + phosphate + H(+). In terms of biological role, part of the ABC transporter complex BtuCDF involved in vitamin B12 import. Responsible for energy coupling to the transport system. The chain is Vitamin B12 import ATP-binding protein BtuD from Pectobacterium atrosepticum (strain SCRI 1043 / ATCC BAA-672) (Erwinia carotovora subsp. atroseptica).